The following is a 213-amino-acid chain: Imidazole glycerol phosphate synthase subunit HisH 2 (213 aa).

In terms of domain architecture, Glutamine amidotransferase type-1 spans 4–211 (RLGLIDYGMG…LNWLETGAKP (208 aa)). Cysteine 82 serves as the catalytic Nucleophile. Residues histidine 186 and glutamate 188 contribute to the active site.

Heterodimer of HisH and HisF.

The protein localises to the cytoplasm. It carries out the reaction 5-[(5-phospho-1-deoxy-D-ribulos-1-ylimino)methylamino]-1-(5-phospho-beta-D-ribosyl)imidazole-4-carboxamide + L-glutamine = D-erythro-1-(imidazol-4-yl)glycerol 3-phosphate + 5-amino-1-(5-phospho-beta-D-ribosyl)imidazole-4-carboxamide + L-glutamate + H(+). The catalysed reaction is L-glutamine + H2O = L-glutamate + NH4(+). It functions in the pathway amino-acid biosynthesis; L-histidine biosynthesis; L-histidine from 5-phospho-alpha-D-ribose 1-diphosphate: step 5/9. Functionally, IGPS catalyzes the conversion of PRFAR and glutamine to IGP, AICAR and glutamate. The HisH subunit provides the glutamine amidotransferase activity that produces the ammonia necessary to HisF for the synthesis of IGP and AICAR. This chain is Imidazole glycerol phosphate synthase subunit HisH 2 (hisH2), found in Prochlorococcus marinus (strain MIT 9313).